We begin with the raw amino-acid sequence, 84 residues long: Putative UPF0320 protein YAL068W-A (84 aa).

This sequence belongs to the UPF0320 family.

This Saccharomyces cerevisiae (strain ATCC 204508 / S288c) (Baker's yeast) protein is Putative UPF0320 protein YAL068W-A.